The sequence spans 140 residues: Protein BIC1 (140 aa).

Over residues 1–10 the composition is skewed to polar residues; sequence MMNIDDTTSP. The interval 1-71 is disordered; the sequence is MMNIDDTTSP…RVDTGRERLK (71 aa). Basic and acidic residues predominate over residues 42-68; that stretch reads ADKKDLALLEEKPKQSQEEDRVDTGRE.

In terms of assembly, interacts with CRY2 in both darkness and light.

Its subcellular location is the nucleus. Functionally, regulates the blue-light dependent dimerization of CRY2 and formation of photobodies. Interacts with photoexited CRY2 to inhibit its activity. Inhibits CRY phosphorylation. The chain is Protein BIC1 from Arabidopsis thaliana (Mouse-ear cress).